Reading from the N-terminus, the 262-residue chain is Encapsulin nanocompartment protein Rv1762c (262 aa).

It belongs to the UPF0145 family.

Its subcellular location is the encapsulin nanocompartment. Functionally, cargo protein of a type 1 encapsulin nanocompartment possibly involved in protection against oxidative stress. The polypeptide is Encapsulin nanocompartment protein Rv1762c (Mycobacterium tuberculosis (strain ATCC 25618 / H37Rv)).